The primary structure comprises 292 residues: Homoserine kinase (292 aa).

Residue 84-94 coordinates ATP; the sequence is PFSRGLGSSSA.

Belongs to the GHMP kinase family. Homoserine kinase subfamily.

Its subcellular location is the cytoplasm. The catalysed reaction is L-homoserine + ATP = O-phospho-L-homoserine + ADP + H(+). The protein operates within amino-acid biosynthesis; L-threonine biosynthesis; L-threonine from L-aspartate: step 4/5. Its function is as follows. Catalyzes the ATP-dependent phosphorylation of L-homoserine to L-homoserine phosphate. This Campylobacter hominis (strain ATCC BAA-381 / DSM 21671 / CCUG 45161 / LMG 19568 / NCTC 13146 / CH001A) protein is Homoserine kinase.